Consider the following 77-residue polypeptide: Putative snRNP Sm-like protein (77 aa).

The 73-residue stretch at 4–76 (RPLDVLNRSL…VVFVSPAPGG (73 aa)) folds into the Sm domain.

Belongs to the snRNP Sm proteins family.

The protein is Putative snRNP Sm-like protein of Archaeoglobus fulgidus (strain ATCC 49558 / DSM 4304 / JCM 9628 / NBRC 100126 / VC-16).